Here is a 355-residue protein sequence, read N- to C-terminus: Holliday junction branch migration complex subunit RuvB (355 aa).

The tract at residues 1–26 (MSIQTDDFASSSPAARRVVSTAPASP) is disordered. The interval 5 to 196 (TDDFASSSPA…FGIVARLEFY (192 aa)) is large ATPase domain (RuvB-L). The span at 9-22 (ASSSPAARRVVSTA) shows a compositional bias: low complexity. ATP-binding positions include Leu-35, Arg-36, Gly-77, Lys-80, Thr-81, Thr-82, 143 to 145 (EDY), Arg-186, Tyr-196, and Arg-233. Position 81 (Thr-81) interacts with Mg(2+). The small ATPAse domain (RuvB-S) stretch occupies residues 197 to 267 (SVEELARIVT…IADKALAMLD (71 aa)). Residues 270–355 (PQGFDVMDRK…TTSGSELFDA (86 aa)) are head domain (RuvB-H). DNA is bound by residues Arg-325 and Arg-330.

Belongs to the RuvB family. As to quaternary structure, homohexamer. Forms an RuvA(8)-RuvB(12)-Holliday junction (HJ) complex. HJ DNA is sandwiched between 2 RuvA tetramers; dsDNA enters through RuvA and exits via RuvB. An RuvB hexamer assembles on each DNA strand where it exits the tetramer. Each RuvB hexamer is contacted by two RuvA subunits (via domain III) on 2 adjacent RuvB subunits; this complex drives branch migration. In the full resolvosome a probable DNA-RuvA(4)-RuvB(12)-RuvC(2) complex forms which resolves the HJ.

The protein resides in the cytoplasm. It carries out the reaction ATP + H2O = ADP + phosphate + H(+). Functionally, the RuvA-RuvB-RuvC complex processes Holliday junction (HJ) DNA during genetic recombination and DNA repair, while the RuvA-RuvB complex plays an important role in the rescue of blocked DNA replication forks via replication fork reversal (RFR). RuvA specifically binds to HJ cruciform DNA, conferring on it an open structure. The RuvB hexamer acts as an ATP-dependent pump, pulling dsDNA into and through the RuvAB complex. RuvB forms 2 homohexamers on either side of HJ DNA bound by 1 or 2 RuvA tetramers; 4 subunits per hexamer contact DNA at a time. Coordinated motions by a converter formed by DNA-disengaged RuvB subunits stimulates ATP hydrolysis and nucleotide exchange. Immobilization of the converter enables RuvB to convert the ATP-contained energy into a lever motion, pulling 2 nucleotides of DNA out of the RuvA tetramer per ATP hydrolyzed, thus driving DNA branch migration. The RuvB motors rotate together with the DNA substrate, which together with the progressing nucleotide cycle form the mechanistic basis for DNA recombination by continuous HJ branch migration. Branch migration allows RuvC to scan DNA until it finds its consensus sequence, where it cleaves and resolves cruciform DNA. The chain is Holliday junction branch migration complex subunit RuvB from Methylibium petroleiphilum (strain ATCC BAA-1232 / LMG 22953 / PM1).